The chain runs to 145 residues: Large ribosomal subunit protein uL15 (145 aa).

A disordered region spans residues 1–50; that stretch reads MLHTIKPVANARKTTKRLGRGPGSGTGKTSGKGHKGQLARSGKTLRPGFE. Residues 20–30 show a composition bias toward gly residues; the sequence is RGPGSGTGKTS.

The protein belongs to the universal ribosomal protein uL15 family. Part of the 50S ribosomal subunit.

In terms of biological role, binds to the 23S rRNA. This is Large ribosomal subunit protein uL15 from Phytoplasma australiense.